The primary structure comprises 347 residues: Heat-inducible transcription repressor HrcA (347 aa).

The protein belongs to the HrcA family.

Negative regulator of class I heat shock genes (grpE-dnaK-dnaJ and groELS operons). Prevents heat-shock induction of these operons. This is Heat-inducible transcription repressor HrcA from Lactococcus lactis subsp. cremoris (strain MG1363).